The chain runs to 244 residues: Chalcone--flavanone isomerase (244 aa).

Substrate is bound by residues Thr-57, Asn-122, and Ser-199.

The protein belongs to the chalcone isomerase family.

The enzyme catalyses a chalcone = a flavanone.. The protein operates within secondary metabolite biosynthesis; flavonoid biosynthesis. Functionally, catalyzes the intramolecular cyclization of bicyclic chalcones into tricyclic (S)-flavanones. Responsible for the isomerization of 4,2',4',6'-tetrahydroxychalcone (also termed chalcone) into naringenin. The protein is Chalcone--flavanone isomerase (CHI) of Arabidopsis lyrata subsp. petraea (Northern rock-cress).